The following is a 359-amino-acid chain: Cell division protein ZipA (359 aa).

Residues 1–4 lie on the Periplasmic side of the membrane; it reads MDLN. Residues 5–25 traverse the membrane as a helical segment; sequence TILIILGILALVALVAHGLWS. Topologically, residues 26–359 are cytoplasmic; that stretch reads NRREKSQYFE…AEEEYLAKIK (334 aa). The interval 78–101 is disordered; sequence PPVQQPLNTEPEPITQETPVRAEP.

This sequence belongs to the ZipA family. In terms of assembly, interacts with FtsZ via their C-terminal domains.

It is found in the cell inner membrane. Functionally, essential cell division protein that stabilizes the FtsZ protofilaments by cross-linking them and that serves as a cytoplasmic membrane anchor for the Z ring. Also required for the recruitment to the septal ring of downstream cell division proteins. This chain is Cell division protein ZipA, found in Mannheimia succiniciproducens (strain KCTC 0769BP / MBEL55E).